A 112-amino-acid polypeptide reads, in one-letter code: Putative inner membrane protein YafU (112 aa).

Residues 1-21 (MSSERDLVNFLGDFSMDVAKA) are Cytoplasmic-facing. The chain crosses the membrane as a helical span at residues 22 to 42 (VIAGGVATAIGSLASFACVSF). Glycine 43 is a topological domain (periplasmic). Residues 44–64 (FPVILVGGAILLTGIVCTVVL) form a helical membrane-spanning segment. At 65–112 (NEIDAQCHLSEKLKYAIRDGLKRQQELDKWKRENMTPFMYVLNTPPVI) the chain is on the cytoplasmic side.

It localises to the cell inner membrane. In Escherichia coli (strain K12), this protein is Putative inner membrane protein YafU (yafU).